A 121-amino-acid polypeptide reads, in one-letter code: Large ribosomal subunit protein bL19 (121 aa).

The protein belongs to the bacterial ribosomal protein bL19 family.

In terms of biological role, this protein is located at the 30S-50S ribosomal subunit interface and may play a role in the structure and function of the aminoacyl-tRNA binding site. This Neisseria gonorrhoeae (strain ATCC 700825 / FA 1090) protein is Large ribosomal subunit protein bL19.